The following is a 93-amino-acid chain: Large ribosomal subunit protein eL42 (93 aa).

Positions 11, 14, 71, and 74 each coordinate Zn(2+). A C4-type zinc finger spans residues 11–74 (CRYCGKHTLH…VNIRFRCTEC (64 aa)).

The protein belongs to the eukaryotic ribosomal protein eL42 family. As to quaternary structure, part of the 50S ribosomal subunit. Zn(2+) is required as a cofactor.

Binds to the 23S rRNA. This Archaeoglobus fulgidus (strain ATCC 49558 / DSM 4304 / JCM 9628 / NBRC 100126 / VC-16) protein is Large ribosomal subunit protein eL42.